The primary structure comprises 502 residues: MVNIRPDEISSIIRQQIDKYDQAIQVSNVGTVLQIGDGIARVYGLDQVMAGELLEFEDKTIGIALNLESDNVGVVLMGEGRGILEGSSVKATGKIAQVPVGKSYLGRVVNALGTPIDGKGDINCSETRLIESIAPGIISRKSVCEPIQTGITAIDSMIPIGRGQRELIIGDRQTGKSSVAIDTIINQKGEDVVCVYVAVGQKAATVASIVTTLEEKGALDYTCIVAANADDPATLQYIAPYTGAAIAEYFMYNGQATLVIYDDLSKQASAYREMSLLLRRPPGREAFPGDVFYLHSRLLERAAKLSDKLGGGSMTALPVIETQAGDVSAYIPTNVISITDGQIFLSGDLFNAGIRPAINVGISVSRVGSAAQIKAMKQVAGKLKLELAQFAELEAFSQFASDLDQATRNQLARGQRLREILKQPQNSPISVEEQVAIIYTGINGYLDDIAVDKVRRFVTNLRTNLKNSKPQYAEIIRNTKTFNSDAENLLKSAIADTKQSFV.

170 to 177 (GDRQTGKS) serves as a coordination point for ATP.

This sequence belongs to the ATPase alpha/beta chains family. As to quaternary structure, F-type ATPases have 2 components, CF(1) - the catalytic core - and CF(0) - the membrane proton channel. CF(1) has five subunits: alpha(3), beta(3), gamma(1), delta(1), epsilon(1). CF(0) has four main subunits: a, b, b' and c.

It is found in the plastid. The protein resides in the chloroplast thylakoid membrane. It catalyses the reaction ATP + H2O + 4 H(+)(in) = ADP + phosphate + 5 H(+)(out). Its function is as follows. Produces ATP from ADP in the presence of a proton gradient across the membrane. The alpha chain is a regulatory subunit. The chain is ATP synthase subunit alpha, chloroplastic from Guillardia theta (Cryptophyte).